Here is a 242-residue protein sequence, read N- to C-terminus: Myogenic factor 6 (242 aa).

Residues 31 to 63 (SPLYPGSDGTLSPCQDQMPPEAGSDSSGEEHVL) form a disordered region. In terms of domain architecture, bHLH spans 93-144 (DRRKAATLRERRRLKKINEAFEALKRRTVANPNQRLPKVEILRSAISYIERL).

Efficient DNA binding requires dimerization with another bHLH protein. Interacts with CSRP3. As to expression, skeletal muscle.

It localises to the nucleus. Functionally, involved in muscle differentiation (myogenic factor). Induces fibroblasts to differentiate into myoblasts. Probable sequence specific DNA-binding protein. This is Myogenic factor 6 (MYF6) from Homo sapiens (Human).